The primary structure comprises 228 residues: Large ribosomal subunit protein uL3 (228 aa).

A disordered region spans residues 157-176 (CHRHAGGTGMSASPSRTFKG).

This sequence belongs to the universal ribosomal protein uL3 family. Part of the 50S ribosomal subunit. Forms a cluster with proteins L14 and L19.

One of the primary rRNA binding proteins, it binds directly near the 3'-end of the 23S rRNA, where it nucleates assembly of the 50S subunit. The polypeptide is Large ribosomal subunit protein uL3 (Rhodopirellula baltica (strain DSM 10527 / NCIMB 13988 / SH1)).